The primary structure comprises 188 residues: uncharacterized protein (188 aa).

Residues 1 to 23 (MFKGQKTLAALAVSLLFTAPVYA) form the signal peptide. A disulfide bond links cysteine 42 and cysteine 81.

It belongs to the fimbrial protein family.

The protein resides in the fimbrium. This is an uncharacterized protein from Escherichia coli (strain K12).